A 265-amino-acid chain; its full sequence is Small ribosomal subunit protein uS2 (265 aa).

Belongs to the universal ribosomal protein uS2 family.

This Microcystis aeruginosa (strain NIES-843 / IAM M-2473) protein is Small ribosomal subunit protein uS2.